A 222-amino-acid chain; its full sequence is GTP-binding nuclear protein Ran-4 (222 aa).

Residues 10–174 (DLPTFKLLIV…LYLARRIAGD (165 aa)) enclose the Small GTPase Ran-type domain. 21-28 (DGGTGKTT) contributes to the GTP binding site. A switch-I region spans residues 40 to 48 (HNTEPTLGV). GTP-binding positions include Gly71, 125–128 (NKVD), and 153–155 (SAK). The segment at 71–87 (GQEKYSGLKDAYYIHGQ) is switch-II.

It belongs to the small GTPase superfamily. Ran family. In terms of assembly, found in a nuclear export complex with RanGTP, exportin and pre-miRNA.

Its subcellular location is the nucleus. Its function is as follows. GTP-binding protein involved in nucleocytoplasmic transport. Required for the import of protein into the nucleus and also for RNA export. Involved in chromatin condensation and control of cell cycle. This is GTP-binding nuclear protein Ran-4 (RAN4) from Arabidopsis thaliana (Mouse-ear cress).